Consider the following 345-residue polypeptide: S-adenosylmethionine:tRNA ribosyltransferase-isomerase (345 aa).

The protein belongs to the QueA family. In terms of assembly, monomer.

It is found in the cytoplasm. It catalyses the reaction 7-aminomethyl-7-carbaguanosine(34) in tRNA + S-adenosyl-L-methionine = epoxyqueuosine(34) in tRNA + adenine + L-methionine + 2 H(+). Its pathway is tRNA modification; tRNA-queuosine biosynthesis. Functionally, transfers and isomerizes the ribose moiety from AdoMet to the 7-aminomethyl group of 7-deazaguanine (preQ1-tRNA) to give epoxyqueuosine (oQ-tRNA). This chain is S-adenosylmethionine:tRNA ribosyltransferase-isomerase, found in Helicobacter pylori (strain J99 / ATCC 700824) (Campylobacter pylori J99).